Here is a 500-residue protein sequence, read N- to C-terminus: MSSFPWLTIIVVLPIFAGSSIFFLPHRGNKIVRWYTICICLLELLLTTYTFCYHFQLDDPLIQLEEDYKWINIFDFHWRLGIDGLSIGPILLTGFITTLATLAARPVTRDSRLFHFLMLAMYSGQIGSFSSRDLLLFFIMWELELIPVYLLLSMWGGKKRLYSATKFILYTAGGSIFLLMGIPGMGLYGSNQPPFNFETSANQSYPVALEILFYFGFLIAYAVKSPIIPLHTWLPDTHGEAHYSTCMLLAGILLKMGAYGLVRINMELLPHAHSIFSPWLMIVGTIQVIYAASTSPGQRNLKKRIAYSSVSHMAFIIIGIGSITDTGLNGAILQIISHGFIGAALFFLAGTSYDRIRLIYLDEMGGIAIPMPKIFTMFSSFSMASLALPGMSGFVAESIVFFGIITSPKYFFMPKILITFVMAIGMILTPIYSLSMSRQMFYGYKLFNVPNSYFVDSGPRELFVSICIFLPVIGIGIYPDFVLSLSVDKVEAILSNYFHR.

A run of 14 helical transmembrane segments spans residues 4–24, 37–57, 84–104, 111–129, 134–154, 167–187, 208–228, 242–262, 272–292, 305–325, 330–350, 374–396, 411–431, and 462–482; these read FPWLTIIVVLPIFAGSSIFFL, ICICLLELLLTTYTFCYHFQL, GLSIGPILLTGFITTLATLAA, SRLFHFLMLAMYSGQIGSF, LLLFFIMWELELIPVYLLLSM, FILYTAGGSIFLLMGIPGMGL, ALEILFYFGFLIAYAVKSPII, HYSTCMLLAGILLKMGAYGLV, AHSIFSPWLMIVGTIQVIYAA, IAYSSVSHMAFIIIGIGSITD, GAILQIISHGFIGAALFFLAG, IFTMFSSFSMASLALPGMSGFVA, FFMPKILITFVMAIGMILTPI, and LFVSICIFLPVIGIGIYPDFV.

The protein belongs to the complex I subunit 4 family.

Its subcellular location is the plastid. It is found in the chloroplast thylakoid membrane. The enzyme catalyses a plastoquinone + NADH + (n+1) H(+)(in) = a plastoquinol + NAD(+) + n H(+)(out). It carries out the reaction a plastoquinone + NADPH + (n+1) H(+)(in) = a plastoquinol + NADP(+) + n H(+)(out). The chain is NAD(P)H-quinone oxidoreductase chain 4, chloroplastic from Chloranthus spicatus (Chulantree).